We begin with the raw amino-acid sequence, 293 residues long: MASITLTPSEKDIQAFLEHYQTSLAPSKNPYIRYFLKLPQATVSIYTSGKILLQGEGAEKYASFFGYQAVEQTSGQNLPLIGTDEVGNGSYFGGLAVVAAFVTPDQHDFLRKLGVGDSKTLTDQKIRQIAPILKEKIQHQALLLSPSKYNEVIGDRYNAVSVKVALHNQAIYLLLQKGVQPEKIVIDAFTSAKNYDKYLAQETNRFSNPISLEEKAEGKYLAVAVSSVIARDLFLENLENLGRELGYQLPSGAGTASDKVASQILQAYGMQGLSFCAKLHFKNTEKAKKRLER.

The RNase H type-2 domain occupies 78-293; that stretch reads LPLIGTDEVG…TEKAKKRLER (216 aa). A divalent metal cation is bound by residues aspartate 84, glutamate 85, and aspartate 187.

It belongs to the RNase HII family. RnhC subfamily. Requires Mn(2+) as cofactor. The cofactor is Mg(2+).

It is found in the cytoplasm. It catalyses the reaction Endonucleolytic cleavage to 5'-phosphomonoester.. Endonuclease that specifically degrades the RNA of RNA-DNA hybrids. This is Ribonuclease HIII from Streptococcus pneumoniae serotype 19F (strain G54).